Consider the following 348-residue polypeptide: Ricin B-like lectin R40C1 (348 aa).

The segment at 1 to 26 (MFGFGHHGHHGQDQPPQHHGGGGGGA) is disordered. The region spanning 199–345 (TVRIFCKADE…CEGDNQRWKI (147 aa)) is the Ricin B-type lectin domain.

As to expression, expressed in roots and shoots.

Functionally, lectin which binds carbohydrates in vitro. Interacts through its lectin domain with glycan structures containing specific motifs. This chain is Ricin B-like lectin R40C1, found in Oryza sativa subsp. japonica (Rice).